A 59-amino-acid polypeptide reads, in one-letter code: Large ribosomal subunit protein uL30 (59 aa).

It belongs to the universal ribosomal protein uL30 family. Part of the 50S ribosomal subunit.

The chain is Large ribosomal subunit protein uL30 from Macrococcus caseolyticus (strain JCSC5402) (Macrococcoides caseolyticum).